A 589-amino-acid polypeptide reads, in one-letter code: Protein MICRORCHIDIA 3 (589 aa).

A disordered region spans residues M1–A33. Residues M542 to V589 adopt a coiled-coil conformation.

The protein belongs to the MORC ATPase protein family. In terms of assembly, homodimer and heterodimer. Component of an RNA-directed DNA methylation (RdDM) complex. Mg(2+) serves as cofactor. Requires Mn(2+) as cofactor.

The protein resides in the nucleus. Exhibits ATPase activity. Binds DNA/RNA in a non-specific manner and exhibits endonuclease activity. Probably involved in DNA repair. Involved in RNA-directed DNA methylation (RdDM) as a component of the RdDM machinery and required for gene silencing. May also be involved in the regulation of chromatin architecture to maintain gene silencing. In Arabidopsis thaliana (Mouse-ear cress), this protein is Protein MICRORCHIDIA 3.